A 563-amino-acid chain; its full sequence is Cystathionine gamma-synthase-like protein ankD (563 aa).

Residues 1-37 (MGELGPASAQHGSDSISFSGSYTQPLGAPQPPNEPHA) are disordered. Polar residues predominate over residues 10–24 (QHGSDSISFSGSYTQ).

The protein belongs to the trans-sulfuration enzymes family. MET7 subfamily. It depends on pyridoxal 5'-phosphate as a cofactor.

The catalysed reaction is cyclo(L-arginyl-(Z)-dehydro-3,4-dihydroxytyrosyl) + O-acetyl-L-homoserine = cyclo(L-arginyl-(Z)-dehydro-4-O-homoseryl-tyrosyl) + acetate + H(+). Its pathway is secondary metabolite biosynthesis. Its function is as follows. Cystathionine gamma-synthase-like protein; part of the ank cluster that mediates the biosynthesis of NK13650 C, a highly modified cyclo-arginine-tyrosine dipeptide. AnkD catalyzes the attachment of L-homoserine moiety using O-acetyl-L-homoserine as co-substrate. Within the pathway, the cyclodipeptide synthase ankA acts as the scaffold-generating enzyme and is responsible for formation of the cyclo-Arg-Tyr diketopiperazine (cRY) from L-Arg and L-Tyr. The ankA product cRY is desaturated by the cytochrome P450 monooxygenase ankB to yield a dehydro-cyclodipeptide intermediate. The FAD-dependent monooxygenase ankC then installs the m-OH, ankD catalyzes the attachment of L-homoserine, and ankE ligates citrate to the ankD product to yield NK13650 B. The O-methyltransferase ankF is responsible for methylation of the C-17 phenol group of NK13650 B to produce NK13650 D. Amidation of NK13650 D with L-Asp by ankG then leads to the production of NK13650 C, whereas amidation of NK13650 B produces NK13650 A. The sequence is that of Cystathionine gamma-synthase-like protein ankD from Aspergillus thermomutatus (Neosartorya pseudofischeri).